Consider the following 68-residue polypeptide: UPF0435 protein SA1696 (68 aa).

The protein belongs to the UPF0435 family.

The polypeptide is UPF0435 protein SA1696 (Staphylococcus aureus (strain N315)).